We begin with the raw amino-acid sequence, 41 residues long: Histone H2B.3, sperm (41 aa).

The disordered stretch occupies residues 1–41 (MPRSPSKSSPKKGSPRKASPKRGGKGAKRAGKGGRRRTVVK). 4 consecutive short sequence motifs (SPKK motif) follow at residues 4-7 (SPSK), 9-12 (SPKK), 14-17 (SPRK), and 19-22 (SPKR). Over residues 9-41 (SPKKGSPRKASPKRGGKGAKRAGKGGRRRTVVK) the composition is skewed to basic residues. Ser14 and Ser19 each carry phosphoserine.

The protein belongs to the histone H2B family. The nucleosome is a histone octamer containing two molecules each of H2A, H2B, H3 and H4 assembled in one H3-H4 heterotetramer and two H2A-H2B heterodimers. The octamer wraps approximately 147 bp of DNA. Monoubiquitination gives a specific tag for epigenetic transcriptional activation and is also prerequisite for histone H3 'Lys-4' and 'Lys-79' methylation. In terms of processing, phosphorylated on SPKK motifs 3 and 4; which may regulate DNA binding. Dephosphorylated during maturation of spermatids to mature sperm and rephosphorylated at fertilization.

The protein resides in the nucleus. It is found in the chromosome. Functionally, core component of nucleosome. Nucleosomes wrap and compact DNA into chromatin, limiting DNA accessibility to the cellular machineries which require DNA as a template. Histones thereby play a central role in transcription regulation, DNA repair, DNA replication and chromosomal stability. DNA accessibility is regulated via a complex set of post-translational modifications of histones, also called histone code, and nucleosome remodeling. The polypeptide is Histone H2B.3, sperm (Echinus esculentus (Sea urchin)).